We begin with the raw amino-acid sequence, 583 residues long: MTTARRRPKRRGTDARTALRNVPILADIDDEQLERLATTVERRHVPANQWLFHAGEPADSIYIVDSGRFVAVAPEGHVFAEMASGDSIGDLGVIAGAARSAGVRALRDGVVWRIAAETFTDMLEATPLLQSAMLRAMARMLRQSRPAKTARRPRVIGVVSNGDTAAAPMVDAIATSLDSHGRTAVIAPPVETTSAVQEYDELVEAFSETLDRAERSNDWVLVVADRGAGDLWRHYVSAQSDRLVVLVDQRYPPDAVDSLATQRPVHLITCLAEPDPSWWDRLAPVSHHPANSDGFGALARRIAGRSLGLVMAGGGARGLAHFGVYQELTEAGVVIDRFGGTSSGAIASAAFALGMDAGDAIAAAREFIAGSDPLDDYTIPISALTRGGRVDRLVQGFFGNTLIEHLPRGFFSVSADMITGDQIIHRRGSVSGAVRASISIPGLIPPVHNGEQLLVDGGLLNNLPANVMCADTDGEVICVDLRRTFVPSKGFGLLPPIVTPPGLLRRLLTGTDNALPPLQETLLRAFDLAASTANLRELPRVAAIIEPDVSKIGVLNFKQIDAALEAGRMAARAALQAQPDLVR.

An a nucleoside 3',5'-cyclic phosphate-binding site is contributed by 24–140 (ILADIDDEQL…SAMLRAMARM (117 aa)). Residues 309–469 (LVMAGGGARG…LNNLPANVMC (161 aa)) enclose the PNPLA domain. The short motif at 313–318 (GGGARG) is the GXGXXG element. The GXSXG signature appears at 340 to 344 (GTSSG). Serine 342 functions as the Nucleophile in the catalytic mechanism. Catalysis depends on aspartate 456, which acts as the Proton acceptor. A DGA/G motif is present at residues 456–458 (DGG).

It belongs to the NTE family.

This is an uncharacterized protein from Mycobacterium tuberculosis (strain CDC 1551 / Oshkosh).